The sequence spans 512 residues: Cytochrome P450 71BT1 (512 aa).

A signal peptide spans 1-24 (MENLFIFLFALLLFCFMLLKLSKK). 2 N-linked (GlcNAc...) asparagine glycosylation sites follow: asparagine 111 and asparagine 168. Position 447 (cysteine 447) interacts with heme.

It belongs to the cytochrome P450 family.

The polypeptide is Cytochrome P450 71BT1 (Catharanthus roseus (Madagascar periwinkle)).